Reading from the N-terminus, the 768-residue chain is Dual specificity calcium/calmodulin-dependent 3',5'-cyclic nucleotide phosphodiesterase 1C (768 aa).

Met-1 bears the N-acetylmethionine mark. The interval 183–206 (EKPRFKSIVHAVQAGIFVERMYRR) is calmodulin-binding. The region spanning 211–588 (VGLSYPPAVI…ERWRAKVPKE (378 aa)) is the PDEase domain. The active-site Proton donor is His-288. Zn(2+) contacts are provided by His-292, His-328, Asp-329, and Asp-436. Asp-329 is a Mg(2+) binding site. Disordered stretches follow at residues 513-557 (LIDE…INNS) and 584-719 (KVPK…PPLR). Composition is skewed to polar residues over residues 516-536 (ETSQ…INSS) and 543-557 (VKSS…INNS). Basic and acidic residues predominate over residues 584–614 (KVPKEEKAKKEAEEKARLAAEEKQKEMEAKS). Positions 631 to 641 (ETKGQVNGTRT) are enriched in polar residues. 2 stretches are compositionally biased toward basic and acidic residues: residues 642 to 659 (SKGD…KAGE) and 665 to 692 (DLKD…DGTK). Positions 698 to 712 (SPAPSTSSTSRLTLP) are enriched in low complexity.

Belongs to the cyclic nucleotide phosphodiesterase family. PDE1 subfamily. In terms of assembly, homodimer. It depends on Zn(2+) as a cofactor. Mg(2+) serves as cofactor. Highly expressed in olfactory epithelium and at moderate levels, in cerebellum, as well as weakly in forebrain, testis, heart and lung. In the olfactory epithelium, expressed by sensory neurons, but not epithelial cells.

It localises to the lysosome. The catalysed reaction is a nucleoside 3',5'-cyclic phosphate + H2O = a nucleoside 5'-phosphate + H(+). The enzyme catalyses 3',5'-cyclic GMP + H2O = GMP + H(+). It catalyses the reaction 3',5'-cyclic AMP + H2O = AMP + H(+). With respect to regulation, type I PDE are activated by the binding of calmodulin in the presence of Ca(2+). Its function is as follows. Calmodulin-dependent cyclic nucleotide phosphodiesterase with a dual specificity for the second messengers cAMP and cGMP, which are key regulators of many important physiological processes. Has a high affinity for both cAMP and cGMP. Modulates the amplitude and duration of the cAMP signal in sensory cilia in response to odorant stimulation, hence contributing to the generation of action potentials. Regulates smooth muscle cell proliferation. Regulates the stability of growth factor receptors, including PDGFRB. The protein is Dual specificity calcium/calmodulin-dependent 3',5'-cyclic nucleotide phosphodiesterase 1C of Rattus norvegicus (Rat).